The sequence spans 409 residues: Failed axon connections homolog (409 aa).

A helical membrane pass occupies residues 68–88 (YLTGGALLAAAAYLLHELLVI). The tract at residues 372–393 (DEGAENSFSRTPDTDFTGHSLF) is disordered.

It belongs to the FAX family.

The protein resides in the membrane. May play a role in axonal development. This is Failed axon connections homolog (Faxc) from Mus musculus (Mouse).